Consider the following 237-residue polypeptide: Orotidine 5'-phosphate decarboxylase (237 aa).

Substrate contacts are provided by residues aspartate 10, lysine 32, aspartate 59–threonine 68, threonine 118, arginine 180, glutamine 189, glycine 209, and arginine 210. Lysine 61 serves as the catalytic Proton donor.

This sequence belongs to the OMP decarboxylase family. Type 1 subfamily. Homodimer.

The enzyme catalyses orotidine 5'-phosphate + H(+) = UMP + CO2. It functions in the pathway pyrimidine metabolism; UMP biosynthesis via de novo pathway; UMP from orotate: step 2/2. Its function is as follows. Catalyzes the decarboxylation of orotidine 5'-monophosphate (OMP) to uridine 5'-monophosphate (UMP). This chain is Orotidine 5'-phosphate decarboxylase, found in Fusobacterium nucleatum subsp. nucleatum (strain ATCC 25586 / DSM 15643 / BCRC 10681 / CIP 101130 / JCM 8532 / KCTC 2640 / LMG 13131 / VPI 4355).